Consider the following 409-residue polypeptide: NADH-quinone oxidoreductase subunit 4 (409 aa).

It belongs to the complex I 49 kDa subunit family. In terms of assembly, NDH-1 is composed of 15 different subunits, Nqo1 to Nqo15. The complex has a L-shaped structure, with the hydrophobic arm (subunits Nqo7, Nqo8 and Nqo10 to Nqo14) embedded in the membrane and the hydrophilic peripheral arm (subunits Nqo1 to Nqo6, Nqo9 and Nqo15) protruding into the bacterial cytoplasm. The hydrophilic domain contains all the redox centers. This subunit interacts extensively with Nqo6.

The protein localises to the cell membrane. The enzyme catalyses a quinone + NADH + 5 H(+)(in) = a quinol + NAD(+) + 4 H(+)(out). Functionally, NDH-1 shuttles electrons from NADH, via FMN and iron-sulfur (Fe-S) centers, to quinones in the respiratory chain. The immediate electron acceptor for the enzyme in this species is menaquinone. Couples the redox reaction to proton translocation (for every two electrons transferred, four hydrogen ions are translocated across the cytoplasmic membrane), and thus conserves the redox energy in a proton gradient required for the synthesis of ATP. The Nqo4 subunit may contain the quinone-binding site. The polypeptide is NADH-quinone oxidoreductase subunit 4 (nqo4) (Thermus thermophilus (strain ATCC 27634 / DSM 579 / HB8)).